Consider the following 505-residue polypeptide: Catalase (505 aa).

The tract at residues 1-25 (MSQQDKKLTGVFGHPVSDRENSMTA) is disordered. Residues His-56 and Asn-129 contribute to the active site. Position 339 (Tyr-339) interacts with heme.

The protein belongs to the catalase family. In terms of assembly, homodimer. Heme serves as cofactor.

The enzyme catalyses 2 H2O2 = O2 + 2 H2O. In terms of biological role, decomposes hydrogen peroxide into water and oxygen; serves to protect cells from the toxic effects of hydrogen peroxide. This Staphylococcus aureus (strain MSSA476) protein is Catalase (katA).